A 326-amino-acid polypeptide reads, in one-letter code: Flap endonuclease 1 (326 aa).

The segment at 1–98 (MGVQFGDFIP…KTRKVRREMK (98 aa)) is N-domain. The Mg(2+) site is built by Asp-27, Asp-80, Glu-152, Glu-154, Asp-173, Asp-175, and Asp-224. The segment at 116 to 245 (EAAKYAKRVS…KRAYELVRSG (130 aa)) is I-domain. An interaction with PCNA region spans residues 317–325 (KQKTLDAWF).

Belongs to the XPG/RAD2 endonuclease family. FEN1 subfamily. As to quaternary structure, interacts with PCNA. PCNA stimulates the nuclease activity without altering cleavage specificity. Mg(2+) is required as a cofactor.

Its function is as follows. Structure-specific nuclease with 5'-flap endonuclease and 5'-3' exonuclease activities involved in DNA replication and repair. During DNA replication, cleaves the 5'-overhanging flap structure that is generated by displacement synthesis when DNA polymerase encounters the 5'-end of a downstream Okazaki fragment. Binds the unpaired 3'-DNA end and kinks the DNA to facilitate 5' cleavage specificity. Cleaves one nucleotide into the double-stranded DNA from the junction in flap DNA, leaving a nick for ligation. Also involved in the base excision repair (BER) pathway. Acts as a genome stabilization factor that prevents flaps from equilibrating into structures that lead to duplications and deletions. Also possesses 5'-3' exonuclease activity on nicked or gapped double-stranded DNA. The protein is Flap endonuclease 1 of Methanocaldococcus jannaschii (strain ATCC 43067 / DSM 2661 / JAL-1 / JCM 10045 / NBRC 100440) (Methanococcus jannaschii).